Here is a 125-residue protein sequence, read N- to C-terminus: Mediator of RNA polymerase II transcription subunit 11 (125 aa).

This sequence belongs to the Mediator complex subunit 11 family. As to quaternary structure, component of the Mediator complex.

It localises to the nucleus. Functionally, component of the Mediator complex, a coactivator involved in the regulated transcription of nearly all RNA polymerase II-dependent genes. Mediator functions as a bridge to convey information from gene-specific regulatory proteins to the basal RNA polymerase II transcription machinery. Mediator is recruited to promoters by direct interactions with regulatory proteins and serves as a scaffold for the assembly of a functional pre-initiation complex with RNA polymerase II and the general transcription factors. The protein is Mediator of RNA polymerase II transcription subunit 11 (MED11) of Candida glabrata (strain ATCC 2001 / BCRC 20586 / JCM 3761 / NBRC 0622 / NRRL Y-65 / CBS 138) (Yeast).